The chain runs to 315 residues: 2-oxoglutarate and iron-dependent oxygenase domain-containing protein 3 (315 aa).

Residues 1 to 31 (MAPQRRGPPRIPEGSSAAERRRATSTKKDRL) are disordered. The Cytoplasmic portion of the chain corresponds to 1-41 (MAPQRRGPPRIPEGSSAAERRRATSTKKDRLPREAQRTWLR). The span at 18–31 (AERRRATSTKKDRL) shows a compositional bias: basic and acidic residues. A helical; Signal-anchor for type II membrane protein membrane pass occupies residues 42–62 (IVAFGVGLALVTCLLWSSVGI). Topologically, residues 63 to 315 (DDDVAEVVAR…DHGIEDPVLT (253 aa)) are lumenal. One can recognise a Fe2OG dioxygenase domain in the interval 203–305 (KPTFFSRINS…AITIAFTCNP (103 aa)). Asn211 is a glycosylation site (N-linked (GlcNAc...) asparagine). The Fe cation site is built by His226 and Asp228. N-linked (GlcNAc...) asparagine glycosylation is present at Asn263. Residue His284 participates in Fe cation binding. The active site involves Arg294. Position 294 (Arg294) interacts with 2-oxoglutarate.

The protein belongs to the OGFOD3 family. Requires Fe(2+) as cofactor. L-ascorbate is required as a cofactor.

It localises to the membrane. This chain is 2-oxoglutarate and iron-dependent oxygenase domain-containing protein 3 (Ogfod3), found in Mus musculus (Mouse).